We begin with the raw amino-acid sequence, 505 residues long: Glycerol kinase (505 aa).

ADP is bound at residue T15. 3 residues coordinate ATP: T15, T16, and S17. A sn-glycerol 3-phosphate-binding site is contributed by T15. R19 contacts ADP. 4 residues coordinate sn-glycerol 3-phosphate: R85, E86, Y136, and D249. Glycerol-binding residues include R85, E86, Y136, D249, and Q250. ADP contacts are provided by T271 and G314. ATP is bound by residues T271, G314, Q318, and G415. 2 residues coordinate ADP: G415 and N419.

It belongs to the FGGY kinase family.

The enzyme catalyses glycerol + ATP = sn-glycerol 3-phosphate + ADP + H(+). Its pathway is polyol metabolism; glycerol degradation via glycerol kinase pathway; sn-glycerol 3-phosphate from glycerol: step 1/1. Inhibited by fructose 1,6-bisphosphate (FBP). Key enzyme in the regulation of glycerol uptake and metabolism. Catalyzes the phosphorylation of glycerol to yield sn-glycerol 3-phosphate. In Mycoplasma capricolum subsp. capricolum (strain California kid / ATCC 27343 / NCTC 10154), this protein is Glycerol kinase.